The chain runs to 250 residues: 3-deoxy-manno-octulosonate cytidylyltransferase (250 aa).

The protein belongs to the KdsB family.

The protein localises to the cytoplasm. It carries out the reaction 3-deoxy-alpha-D-manno-oct-2-ulosonate + CTP = CMP-3-deoxy-beta-D-manno-octulosonate + diphosphate. Its pathway is nucleotide-sugar biosynthesis; CMP-3-deoxy-D-manno-octulosonate biosynthesis; CMP-3-deoxy-D-manno-octulosonate from 3-deoxy-D-manno-octulosonate and CTP: step 1/1. The protein operates within bacterial outer membrane biogenesis; lipopolysaccharide biosynthesis. Functionally, activates KDO (a required 8-carbon sugar) for incorporation into bacterial lipopolysaccharide in Gram-negative bacteria. This chain is 3-deoxy-manno-octulosonate cytidylyltransferase, found in Yersinia pseudotuberculosis serotype O:1b (strain IP 31758).